The following is a 362-amino-acid chain: Forkhead box protein F (362 aa).

The interval 19 to 70 is disordered; sequence LDSTAPNNSHRTIKAENYFNEDEEDYNENSHEDSEDSKEDSDGQGCRSRKRK. Residues 37 to 57 are compositionally biased toward acidic residues; sequence FNEDEEDYNENSHEDSEDSKE. The fork-head DNA-binding region spans 72–169; it reads KPPFSYIALI…EENGFRRRPR (98 aa).

The protein localises to the nucleus. In terms of biological role, transcription factor that is required for cell fate of coelomocytes which are non-muscle mesodermal cells. Acts in concert with, and by activating expression of, the homeodomain gene ceh-34. Binds to the sequence motif 5'-ATAAA[T/C]A-3'. The chain is Forkhead box protein F from Caenorhabditis elegans.